The chain runs to 61 residues: Photosystem II reaction center protein Z (61 aa).

2 consecutive transmembrane segments (helical) span residues 5 to 25 and 38 to 58; these read LTAL…VALA and NKAF…DGIS.

Belongs to the PsbZ family. PSII is composed of 1 copy each of membrane proteins PsbA, PsbB, PsbC, PsbD, PsbE, PsbF, PsbH, PsbI, PsbJ, PsbK, PsbL, PsbM, PsbT, PsbX, PsbY, PsbZ, Psb30/Ycf12, at least 3 peripheral proteins of the oxygen-evolving complex and a large number of cofactors. It forms dimeric complexes.

It is found in the plastid. The protein localises to the chloroplast thylakoid membrane. Its function is as follows. May control the interaction of photosystem II (PSII) cores with the light-harvesting antenna, regulates electron flow through the 2 photosystem reaction centers. PSII is a light-driven water plastoquinone oxidoreductase, using light energy to abstract electrons from H(2)O, generating a proton gradient subsequently used for ATP formation. This is Photosystem II reaction center protein Z from Skeletonema costatum (Marine centric diatom).